We begin with the raw amino-acid sequence, 343 residues long: DNA-directed RNA polymerase subunit alpha (343 aa).

The interval 1 to 243 is alpha N-terminal domain (alpha-NTD); the sequence is MTQEIDEKIP…EQLDIFINFD (243 aa). The tract at residues 261–343 is alpha C-terminal domain (alpha-CTD); the sequence is ENPYLDKPVE…NAPSDAETEE (83 aa).

This sequence belongs to the RNA polymerase alpha chain family. In terms of assembly, homodimer. The RNAP catalytic core consists of 2 alpha, 1 beta, 1 beta' and 1 omega subunit. When a sigma factor is associated with the core the holoenzyme is formed, which can initiate transcription.

It carries out the reaction RNA(n) + a ribonucleoside 5'-triphosphate = RNA(n+1) + diphosphate. Its function is as follows. DNA-dependent RNA polymerase catalyzes the transcription of DNA into RNA using the four ribonucleoside triphosphates as substrates. The chain is DNA-directed RNA polymerase subunit alpha from Desulfotalea psychrophila (strain LSv54 / DSM 12343).